The sequence spans 130 residues: Small ribosomal subunit protein uS8 (130 aa).

It belongs to the universal ribosomal protein uS8 family. As to quaternary structure, part of the 30S ribosomal subunit. Contacts proteins S5 and S12.

Functionally, one of the primary rRNA binding proteins, it binds directly to 16S rRNA central domain where it helps coordinate assembly of the platform of the 30S subunit. The sequence is that of Small ribosomal subunit protein uS8 from Actinobacillus succinogenes (strain ATCC 55618 / DSM 22257 / CCUG 43843 / 130Z).